Consider the following 238-residue polypeptide: Envelope glycoprotein G (238 aa).

The N-terminal stretch at 1 to 24 (MSQGAMRAVVPIIPFLLVLVGVSG) is a signal peptide. Topologically, residues 25-189 (VPTNVSSTTQ…SFLTASPALD (165 aa)) are virion surface. N-linked (GlcNAc...) asparagine; by host glycans are attached at residues Asn-28 and Asn-49. 2 stretches are compositionally biased toward polar residues: residues 28–42 (NVSS…TTGR) and 49–68 (NMTQ…TTPD). The segment at 28-171 (NVSSTTQPQL…LTSKGRPLVP (144 aa)) is disordered. The segment covering 78–88 (LEEEEEEEGAG) has biased composition (acidic residues). Positions 89–100 (DGEHLEGGDGTR) are enriched in basic and acidic residues. Residues 190–210 (TLFVVSTVIHTLSFLCIGAMA) traverse the membrane as a helical segment. At 211-238 (THLCGGWSRRGRRTHPSVRYVCLPSERG) the chain is on the intravirion side.

It belongs to the alphaherpesvirinae glycoprotein G family.

The protein localises to the virion membrane. Its function is as follows. Chemokine-binding protein that inhibits neutrophils' chemotaxis. The sequence is that of Envelope glycoprotein G (gG) from Human herpesvirus 1 (strain 17) (HHV-1).